Consider the following 94-residue polypeptide: uncharacterized protein (94 aa).

Belongs to the phD/YefM antitoxin family.

This is an uncharacterized protein from Synechocystis sp. (strain ATCC 27184 / PCC 6803 / Kazusa).